A 311-amino-acid chain; its full sequence is Meteorin-like protein (311 aa).

The first 45 residues, 1–45 (MRGVVWAARRRAGQQWPRSPGPGPGPPPPPPLLLLLLLLLGGASA), serve as a signal peptide directing secretion. Cys52 and Cys75 are oxidised to a cystine. Residue Asn103 is glycosylated (N-linked (GlcNAc...) asparagine). Disulfide bonds link Cys107/Cys143, Cys188/Cys260, Cys191/Cys284, and Cys201/Cys306.

This sequence belongs to the meteorin family. As to expression, abundantly expressed in adipose tissue.

It is found in the secreted. In terms of biological role, hormone induced following exercise or cold exposure that promotes energy expenditure. Induced either in the skeletal muscle after exercise or in adipose tissue following cold exposure and is present in the circulation. Able to stimulate energy expenditure associated with the browning of the white fat depots and improves glucose tolerance. Does not promote an increase in a thermogenic gene program via direct action on adipocytes, but acts by stimulating several immune cell subtypes to enter the adipose tissue and activate their prothermogenic actions. Stimulates an eosinophil-dependent increase in IL4 expression and promotes alternative activation of adipose tissue macrophages, which are required for the increased expression of the thermogenic and anti-inflammatory gene programs in fat. Required for some cold-induced thermogenic responses, suggesting a role in metabolic adaptations to cold temperatures. The protein is Meteorin-like protein (Metrnl) of Rattus norvegicus (Rat).